The primary structure comprises 167 residues: UPF0102 protein RB9115 (167 aa).

Belongs to the UPF0102 family.

In Rhodopirellula baltica (strain DSM 10527 / NCIMB 13988 / SH1), this protein is UPF0102 protein RB9115.